The sequence spans 331 residues: Putative ankyrin repeat protein RBE_0261 (331 aa).

An ANK repeat occupies 94–159; sequence QGENVIHKCV…KAKNTLLNIV (66 aa).

The sequence is that of Putative ankyrin repeat protein RBE_0261 from Rickettsia bellii (strain RML369-C).